The following is a 253-amino-acid chain: GTP cyclohydrolase III 2 (253 aa).

The interval 102 to 125 is disordered; the sequence is LRDAGSAQDENRQEALSHRSPPGF.

Belongs to the archaeal-type GTP cyclohydrolase family.

It carries out the reaction GTP + 3 H2O = 2-amino-5-formylamino-6-(5-phospho-D-ribosylamino)pyrimidin-4(3H)-one + 2 phosphate + 2 H(+). Its function is as follows. Catalyzes the formation of 2-amino-5-formylamino-6-ribofuranosylamino-4(3H)-pyrimidinone ribonucleotide monophosphate and inorganic phosphate from GTP. Also has an independent pyrophosphate phosphohydrolase activity. In Halobacterium salinarum (strain ATCC 700922 / JCM 11081 / NRC-1) (Halobacterium halobium), this protein is GTP cyclohydrolase III 2 (gch32).